The sequence spans 93 residues: Large ribosomal subunit protein uL23 (93 aa).

The protein belongs to the universal ribosomal protein uL23 family. In terms of assembly, part of the 50S ribosomal subunit. Contacts protein L29, and trigger factor when it is bound to the ribosome.

One of the early assembly proteins it binds 23S rRNA. One of the proteins that surrounds the polypeptide exit tunnel on the outside of the ribosome. Forms the main docking site for trigger factor binding to the ribosome. In Opitutus terrae (strain DSM 11246 / JCM 15787 / PB90-1), this protein is Large ribosomal subunit protein uL23.